A 400-amino-acid chain; its full sequence is MAIEKELLDQLLAGRDPSEVFGKDGLLDDLKKALSERILNAELDEHLDVERSEGTAANRRNGSSKKTVLTGTSKMTLTIPRDRAGTFDPKLIARYQRRFPDFDDKIISMYARGMTVREIQGHLEDIYGIDVSPDLISAVTDQVLEAVGEWQNRPLELCYPLVFFDAIRVKIRDEGFVRNKAVYVALAVLADGTKEILGLWIEQTEGAKFWLRVMNELKSRGCQDILIAVVDGLKGFPDAITAVFPQTIVQTCIVHLIRHSLEFVSYKDRKPVVPALRAIYRARDAEAGLKALEAFEEGYWGQKYPAISQSWRRNWEHVVPFFAFPEGVRRIIYTTNAIEALNSKLRRAVRSRGHFPGDEAAMKLLYLVLNNAAEQWKRAPREWVEAKTQFAVIFGERFFN.

The protein belongs to the transposase mutator family.

Required for the transposition of the insertion element. The sequence is that of Probable transposase for insertion sequence element ISRM3-like from Sinorhizobium fredii (strain NBRC 101917 / NGR234).